Consider the following 382-residue polypeptide: Two-component response regulator ARR14 (382 aa).

A Response regulatory domain is found at 12–128 (RILVVDDDTS…ELKNIWQHVV (117 aa)). 4-aspartylphosphate is present on D63. Over residues 171–181 (CRNKKKKKKRS) the composition is skewed to basic residues. Positions 171 to 193 (CRNKKKKKKRSVDRDDNEDDLLL) are disordered. The Nuclear localization signal motif lies at 199 to 202 (KKSR). Positions 202 to 252 (RVVWSIELHQQFVNAVNKLGIDKAVPKRILELMNVPGLSRENVASHLQKFR) form a DNA-binding region, myb-like GARP.

The protein belongs to the ARR family. Type-B subfamily. In terms of assembly, binds the target DNA as a monomer. Post-translationally, two-component system major event consists of a His-to-Asp phosphorelay between a sensor histidine kinase (HK) and a response regulator (RR). In plants, the His-to-Asp phosphorelay involves an additional intermediate named Histidine-containing phosphotransfer protein (HPt). This multistep phosphorelay consists of a His-Asp-His-Asp sequential transfer of a phosphate group between first a His and an Asp of the HK protein, followed by the transfer to a conserved His of the HPt protein and finally the transfer to an Asp in the receiver domain of the RR protein. In terms of tissue distribution, predominantly expressed in young leaf tissue.

The protein localises to the nucleus. In terms of biological role, transcriptional activator that binds specifically to the DNA sequence 5'-[AG]GATT-3'. Functions as a response regulator involved in His-to-Asp phosphorelay signal transduction system. Phosphorylation of the Asp residue in the receiver domain activates the ability of the protein to promote the transcription of target genes. Could directly activate some type-A response regulators in response to cytokinins. This is Two-component response regulator ARR14 (ARR14) from Arabidopsis thaliana (Mouse-ear cress).